The primary structure comprises 91 residues: MARMVQCIKLNKEAEGMDFAPLPGELGKRIWNQVSKEAWAGWLKQQTMLINENRLNMADPRARQYLLKQVEKHFFEGGADTAQGYVPPPAE.

This sequence belongs to the Fe(2+)-trafficking protein family.

Functionally, could be a mediator in iron transactions between iron acquisition and iron-requiring processes, such as synthesis and/or repair of Fe-S clusters in biosynthetic enzymes. The sequence is that of Probable Fe(2+)-trafficking protein from Polynucleobacter necessarius subsp. necessarius (strain STIR1).